The sequence spans 281 residues: MYTTAVIDEIRQQVRQWRASGETVAFVPTMGNLHAGHITLIKEAKQRADHVVASIFVNPMQFGKNEDLDAYPRTLAEDQAALTAAGCELLFTPTPDIIYPKGLDAQTFVEVPGISDELCGASRPGHFRGVATIVLKLFNIVQPDVALFGRKDYQQLLVIRTMVEDLSLPLEIVGVETVREASGLAMSSRNGYLTADEKARAAALKAALDALAMQIGAGTAIDAAITEANAALVTAGFRPDYLEVRSATTLALPTDADKELVVLAAAYLGKARLIDNLVFSR.

M30–H37 lines the ATP pocket. Residue H37 is the Proton donor of the active site. Residue Q61 participates in (R)-pantoate binding. Beta-alanine is bound at residue Q61. G149–D152 contributes to the ATP binding site. Q155 provides a ligand contact to (R)-pantoate. Residues V178 and M186–R189 contribute to the ATP site.

This sequence belongs to the pantothenate synthetase family. Homodimer.

The protein resides in the cytoplasm. It catalyses the reaction (R)-pantoate + beta-alanine + ATP = (R)-pantothenate + AMP + diphosphate + H(+). It functions in the pathway cofactor biosynthesis; (R)-pantothenate biosynthesis; (R)-pantothenate from (R)-pantoate and beta-alanine: step 1/1. In terms of biological role, catalyzes the condensation of pantoate with beta-alanine in an ATP-dependent reaction via a pantoyl-adenylate intermediate. The chain is Pantothenate synthetase from Shewanella amazonensis (strain ATCC BAA-1098 / SB2B).